The following is a 227-amino-acid chain: MQTFTAVVPAAGRGSRMQANKPKQYLHLGDKTIIEHTLTRLLAHPQIEKIVVVIADDDHYFSSLPLANHPRIEVTLGGPERAISVLNGLSSVETDWVLVHDAARPCITQSDLDALMAAAELGEDGAILAVPVKDTMKRSDSQQRIEETVERGHLWHALTPQMFPTQQLADAIDAGLTQSIVLTDEASAMERAGFKPLLVAGRSDNIKVTRPEDLALAAFILQQQELE.

This sequence belongs to the IspD/TarI cytidylyltransferase family. IspD subfamily.

The enzyme catalyses 2-C-methyl-D-erythritol 4-phosphate + CTP + H(+) = 4-CDP-2-C-methyl-D-erythritol + diphosphate. It functions in the pathway isoprenoid biosynthesis; isopentenyl diphosphate biosynthesis via DXP pathway; isopentenyl diphosphate from 1-deoxy-D-xylulose 5-phosphate: step 2/6. Its function is as follows. Catalyzes the formation of 4-diphosphocytidyl-2-C-methyl-D-erythritol from CTP and 2-C-methyl-D-erythritol 4-phosphate (MEP). The sequence is that of 2-C-methyl-D-erythritol 4-phosphate cytidylyltransferase from Tolumonas auensis (strain DSM 9187 / NBRC 110442 / TA 4).